Reading from the N-terminus, the 261-residue chain is Indole-3-glycerol phosphate synthase (261 aa).

It belongs to the TrpC family.

It carries out the reaction 1-(2-carboxyphenylamino)-1-deoxy-D-ribulose 5-phosphate + H(+) = (1S,2R)-1-C-(indol-3-yl)glycerol 3-phosphate + CO2 + H2O. It functions in the pathway amino-acid biosynthesis; L-tryptophan biosynthesis; L-tryptophan from chorismate: step 4/5. The protein is Indole-3-glycerol phosphate synthase of Oceanobacillus iheyensis (strain DSM 14371 / CIP 107618 / JCM 11309 / KCTC 3954 / HTE831).